Reading from the N-terminus, the 1865-residue chain is Dedicator of cytokinesis protein 1 (1865 aa).

An SH3 domain is found at 9 to 70; sequence REEKYGVAFY…PASYIHLKEA (62 aa). The C2 DOCK-type domain maps to 425–609; it reads RNDIYVTLVQ…DSFQISTLVC (185 aa). The DOCKER domain maps to 1207–1617; the sequence is YKEIEREEMY…VEKEYGVRIM (411 aa). 2 disordered regions span residues 1619–1716 and 1732–1865; these read SSLD…EFKP and TISP…GIVQ. Residues 1639 to 1666 are compositionally biased toward low complexity; sequence PSSSRPLSVASVSSLSSDSTPSRPGSDG. Residues 1680-1694 show a composition bias toward basic and acidic residues; it reads RSQDKLDKDDLEKEK. A Phosphoserine modification is found at serine 1681. Residues 1687–1695 are phosphoinositide-binding; it reads KDDLEKEKK. The span at 1695–1704 shows a compositional bias: basic residues; it reads KDKKKEKRNS. The span at 1705 to 1716 shows a compositional bias: basic and acidic residues; sequence KHQEIFEKEFKP. A phosphoserine mark is found at serine 1743, serine 1751, serine 1756, serine 1761, and serine 1764. Low complexity predominate over residues 1756 to 1766; it reads SVSPSSPSSQQ. Threonine 1767 and threonine 1772 each carry phosphothreonine. Residues 1793 to 1819 form an interaction with NCK2 second and third SH3 domain (minor) region; that stretch reads ADVADVPPPLPLKGSVADYGNLMENQD. An SH3-binding; interaction with CRK motif is present at residues 1799–1805; the sequence is PPPLPLK. Positions 1820–1836 are interaction with NCK2 third SH3 domain (major); the sequence is LLGSPTPPPPPPHQRHL. Pro residues predominate over residues 1824-1851; it reads PTPPPPPPHQRHLPPPLPSKTPPPPPPK. The interval 1837 to 1852 is interaction with NCK2 (minor); that stretch reads PPPLPSKTPPPPPPKT. An SH3-binding; interaction with CRK motif is present at residues 1838 to 1843; the sequence is PPLPSK. Positions 1855-1865 are enriched in polar residues; that stretch reads KQASVDSGIVQ. At serine 1858 the chain carries Phosphoserine.

The protein belongs to the DOCK family. Interacts with the SH3 domains of CRK and NCK2 via multiple sites. Interacts with nucleotide-free RAC1 via its DOCKER domain. Interacts with ELMO1, ELMO2 and probably ELMO3 via its SH3 domain. Interacts with ADGRB1. Identified in a complex with AUTS2 and ELMO2. Highly expressed in placenta, lung, kidney, pancreas and ovary. Expressed at intermediate level in thymus, testes and colon.

Its subcellular location is the cytoplasm. The protein resides in the membrane. Involved in cytoskeletal rearrangements required for phagocytosis of apoptotic cells and cell motility. Along with DOCK1, mediates CRK/CRKL regulation of epithelial and endothelial cell spreading and migration on type IV collagen. Functions as a guanine nucleotide exchange factor (GEF), which activates Rac Rho small GTPases by exchanging bound GDP for free GTP. Its GEF activity may be enhanced by ELMO1. The protein is Dedicator of cytokinesis protein 1 (DOCK1) of Homo sapiens (Human).